A 379-amino-acid polypeptide reads, in one-letter code: MSATLALTEQLIARASVTPDDQHCQQIMTERLAALGFECETIASHGVTNLWAVKRGADGRDGKLLAFAGHTDVVPTGPLEQWTSPPFVPAHRDGKLYGRGAADMKTSLAAFVVASEEFVAAHPGHRGAIAFLITSDEEGPATDGTVKVVELLEARGERVDYCIVGEPTSTAELGDVVKNGRRGSMSGELVVKGVQGHIAYPHLAKNPIHLLAPALAELAAEQWDAGNEYFPPTTWQVSNLHAGTGATNVIPGHADLMFNFRFSTASTVEGLQARVHAILDKHGLEYTLKWSVSGLPFLTPRGDLSNALENAIRAETGLTTELSTTGGTSDGRFIARICPQVIEFGPPNGSIHKIDEHIDVRFVDPLKNVYRRVLEQLIA.

H70 is a Zn(2+) binding site. The active site involves D72. D103 provides a ligand contact to Zn(2+). Residue E137 is the Proton acceptor of the active site. The Zn(2+) site is built by E138, E166, and H352.

The protein belongs to the peptidase M20A family. DapE subfamily. Homodimer. It depends on Zn(2+) as a cofactor. The cofactor is Co(2+).

It catalyses the reaction N-succinyl-(2S,6S)-2,6-diaminopimelate + H2O = (2S,6S)-2,6-diaminopimelate + succinate. It participates in amino-acid biosynthesis; L-lysine biosynthesis via DAP pathway; LL-2,6-diaminopimelate from (S)-tetrahydrodipicolinate (succinylase route): step 3/3. In terms of biological role, catalyzes the hydrolysis of N-succinyl-L,L-diaminopimelic acid (SDAP), forming succinate and LL-2,6-diaminopimelate (DAP), an intermediate involved in the bacterial biosynthesis of lysine and meso-diaminopimelic acid, an essential component of bacterial cell walls. This Burkholderia ambifaria (strain MC40-6) protein is Succinyl-diaminopimelate desuccinylase.